A 71-amino-acid chain; its full sequence is U3-agatoxin-Ao1a (71 aa).

An N-terminal signal peptide occupies residues M1–A20. A propeptide spanning residues V21–R33 is cleaved from the precursor. Intrachain disulfides connect C35/C51, C42/C56, C50/C66, and C58/C64. Position 70 is a serine amide (S70).

The protein belongs to the neurotoxin 07 (Beta/delta-agtx) family. 01 (aga-2) subfamily. Expressed by the venom gland.

It localises to the secreted. Functionally, insecticidal neurotoxin that modulates the insect Nav channel (DmNaV1/tipE (para/tipE)) in a unique manner, with both the activation and inactivation processes being affected. The voltage dependence of activation is shifted toward more hyperpolarized potentials (analogous to site 4 toxins) and a non-inactivating persistent sodium current is induced (site 3-like action). Interestingly, both effects take place in a voltage-dependent manner, producing a bell-shaped curve between -80 and 0 mV. Compared to beta/delta-agatoxin-1 to -3, this toxin appears to affect the insect sodium channel only weakly. This Agelena orientalis (Funnel-web spider) protein is U3-agatoxin-Ao1a.